Reading from the N-terminus, the 284-residue chain is Transcription factor lir-3 (284 aa).

The segment covering 50–60 (EPRISRDELRE) has biased composition (basic and acidic residues). Residues 50–71 (EPRISRDELRETASSPVTFETR) form a disordered region. The C2H2-type zinc-finger motif lies at 224-247 (YKCKQCDYLDYRKSTMRKHTVSQH).

As to expression, expressed in FLP neurons.

It is found in the nucleus. Positively regulates the RNA polymerase III-associated transcription of small non-coding RNAs. In Caenorhabditis elegans, this protein is Transcription factor lir-3.